We begin with the raw amino-acid sequence, 647 residues long: XK-related protein 4 (647 aa).

The chain crosses the membrane as a helical span at residues 142-162 (WFGLTLFFVVLGSLSVQVFSF). The disordered stretch occupies residues 193-238 (VSSGSAAGEGEARPSTPQRQASNASKSNIAATNSGSNSNGATRTSG). A Phosphoserine modification is found at Ser-197. The span at 207–236 (STPQRQASNASKSNIAATNSGSNSNGATRT) shows a compositional bias: polar residues. The next 7 helical transmembrane spans lie at 245-265 (CSFCIWLLQSLIHILQLGQVW), 328-348 (LQALQGFTAAASLVSLAWALA), 362-382 (KPISYMAVIIQFCWHFFTIAA), 393-415 (VFQLYFGIFIVLHWCIMTFWIVH), 425-445 (WEEIVFDMVVGIIYIFSWFNV), 454-474 (LFIYYFVILLENTALSALWYL), and 484-504 (FAIPALCVVFSSFLTGVVFML).

This sequence belongs to the XK family. Homodimer; homodimerization takes place upon caspase cleavage. Interacts with the processed C-terminus of XRCC4 (protein XRCC4, C-terminus); interaction promotes the phospholipid scramblase activity. In terms of processing, undergoes proteolytic processing by caspase-3 (CASP3), caspase-6 (CASP6) and caspase-7 (CASP7) to generate the XK-related protein 4, processed form, leading to its activation.

It localises to the cell membrane. It carries out the reaction a 1,2-diacyl-sn-glycero-3-phospho-L-serine(in) = a 1,2-diacyl-sn-glycero-3-phospho-L-serine(out). Its activity is regulated as follows. Phospholipid scramblase activity is activated upon caspase cleavage to generate the XK-related protein 4, processed form. Does not act prior the onset of apoptosis. Homodimerizes upon caspase cleavage. Phospholipid scramblase activity is activated following interaction with the processed C-terminus of XRCC4 (protein XRCC4, C-terminus). In terms of biological role, phospholipid scramblase that promotes phosphatidylserine exposure on apoptotic cell surface. Phosphatidylserine is a specific marker only present at the surface of apoptotic cells and acts as a specific signal for engulfment. The chain is XK-related protein 4 from Rattus norvegicus (Rat).